The following is a 121-amino-acid chain: Small ribosomal subunit protein uS13 (121 aa).

The segment at G94–K121 is disordered.

It belongs to the universal ribosomal protein uS13 family. Part of the 30S ribosomal subunit. Forms a loose heterodimer with protein S19. Forms two bridges to the 50S subunit in the 70S ribosome.

Its function is as follows. Located at the top of the head of the 30S subunit, it contacts several helices of the 16S rRNA. In the 70S ribosome it contacts the 23S rRNA (bridge B1a) and protein L5 of the 50S subunit (bridge B1b), connecting the 2 subunits; these bridges are implicated in subunit movement. Contacts the tRNAs in the A and P-sites. The chain is Small ribosomal subunit protein uS13 from Paraburkholderia phytofirmans (strain DSM 17436 / LMG 22146 / PsJN) (Burkholderia phytofirmans).